Consider the following 712-residue polypeptide: Phosphatase and actin regulator 4 (712 aa).

Disordered regions lie at residues 1 to 22 (MGQA…GQPT) and 90 to 405 (RGLL…EVPK). One copy of the RPEL 1 repeat lies at 72 to 97 (EVLERKISMRKPREELVKRGLLLEDS). Over residues 114 to 124 (NGHTTLIGSTR) the composition is skewed to polar residues. Residues S125, S127, S140, and S156 each carry the phosphoserine modification. The span at 136 to 152 (ERIASLRKPVPEEEPKK) shows a compositional bias: basic and acidic residues. Residues 198–230 (ATSSGSLARPSSSASTTAITTAPAATMAATNPA) show a composition bias toward low complexity. The span at 233–243 (VHSSGPPSQAP) shows a compositional bias: polar residues. A compositionally biased stretch (low complexity) spans 245 to 267 (TLPAAPASTHTTATLSLTHTGPA). A phosphoserine mark is found at S282, S303, and S353. Over residues 345-357 (SEPLLTPSSSPLP) the composition is skewed to low complexity. A compositionally biased stretch (pro residues) spans 358–371 (AHIPPEPPQSPPFP). S436 carries the post-translational modification Phosphoserine. T441 bears the Phosphothreonine mark. S452, S462, S473, S524, S526, S567, and S600 each carry phosphoserine. Positions 507 to 557 (VIPKLPQCLQEEEEGKESDSDSEGPIQYRDEEDEDESHHSALANKVKRKDT) are disordered. The span at 516–528 (QEEEEGKESDSDS) shows a compositional bias: acidic residues. RPEL repeat units follow at residues 593-618 (NTLI…QPKN) and 631-656 (RRLT…RFNE). The segment at 602–626 (RPTPEELEQRNILQPKNEADRQAEK) is disordered. S638 bears the Phosphoserine mark.

This sequence belongs to the phosphatase and actin regulator family. Binds PPP1CA and actin.

It localises to the cytoplasm. Its subcellular location is the cell projection. The protein localises to the lamellipodium. Its function is as follows. Regulator of protein phosphatase 1 (PP1) required for neural tube and optic fissure closure, and enteric neural crest cell (ENCCs) migration during development. Acts as an activator of PP1 by interacting with PPP1CA and preventing phosphorylation of PPP1CA at 'Thr-320'. During neural tube closure, localizes to the ventral neural tube and activates PP1, leading to down-regulate cell proliferation within cranial neural tissue and the neural retina. Also acts as a regulator of migration of enteric neural crest cells (ENCCs) by activating PP1, leading to dephosphorylation and subsequent activation of cofilin (COF1 or COF2) and repression of the integrin signaling through the RHO/ROCK pathway. The protein is Phosphatase and actin regulator 4 (PHACTR4) of Bos taurus (Bovine).